Consider the following 498-residue polypeptide: Glycerol kinase (498 aa).

Position 11 (Thr-11) interacts with ADP. ATP contacts are provided by Thr-11, Thr-12, and Ser-13. Thr-11 is a binding site for sn-glycerol 3-phosphate. Arg-15 is a binding site for ADP. Residues Arg-81, Glu-82, Tyr-133, and Asp-242 each contribute to the sn-glycerol 3-phosphate site. 5 residues coordinate glycerol: Arg-81, Glu-82, Tyr-133, Asp-242, and Gln-243. ADP-binding residues include Thr-264 and Gly-307. Residues Thr-264, Gly-307, Gln-311, and Gly-411 each contribute to the ATP site. Gly-411 provides a ligand contact to ADP.

Belongs to the FGGY kinase family.

It carries out the reaction glycerol + ATP = sn-glycerol 3-phosphate + ADP + H(+). It participates in polyol metabolism; glycerol degradation via glycerol kinase pathway; sn-glycerol 3-phosphate from glycerol: step 1/1. With respect to regulation, inhibited by fructose 1,6-bisphosphate (FBP). Key enzyme in the regulation of glycerol uptake and metabolism. Catalyzes the phosphorylation of glycerol to yield sn-glycerol 3-phosphate. The sequence is that of Glycerol kinase from Afipia carboxidovorans (strain ATCC 49405 / DSM 1227 / KCTC 32145 / OM5) (Oligotropha carboxidovorans).